The chain runs to 558 residues: Phosphatase and actin regulator 3 (558 aa).

Over residues 1-11 (MAASEDGSSCL) the composition is skewed to polar residues. Disordered stretches follow at residues 1-69 (MAAS…KLAT), 81-288 (KKKN…RPLP), and 300-366 (LATK…ENLM). Over residues 18–33 (QSDPSFLSDSSATSTD) the composition is skewed to low complexity. At T69 the chain carries Phosphothreonine. Residues 92–117 (SALEKKMAGRQGREELIKQGLLEMME) form an RPEL 1 repeat. Residues 94–108 (LEKKMAGRQGREELI) are compositionally biased toward basic and acidic residues. The segment covering 144 to 169 (ETLTSEGAQPGSPSASGTDQVSQDEL) has biased composition (polar residues). Over residues 228-239 (PSPPLLPTPPPK) the composition is skewed to pro residues. The residue at position 229 (S229) is a Phosphoserine. At T235 the chain carries Phosphothreonine. Composition is skewed to basic and acidic residues over residues 300 to 341 (LATK…RDEA) and 354 to 363 (ATKDSEENKE). RPEL repeat units follow at residues 400-425 (ELLA…PRRT), 438-463 (MKLS…KQRN), and 476-501 (QRLT…IRFS). Positions 449–485 (AVEELERRNILKQRNDQTEQEERREIKQRLTRKLNQR) form a coiled coil.

The protein belongs to the phosphatase and actin regulator family. As to quaternary structure, binds PPP1CA and actin; thus inhibiting the protein phosphatase 1 (PP1) activity.

Its subcellular location is the nucleus matrix. The chain is Phosphatase and actin regulator 3 (Phactr3) from Mus musculus (Mouse).